The following is a 547-amino-acid chain: Chaperonin GroEL (547 aa).

ATP is bound by residues 30–33, Lys51, 87–91, Gly415, 479–481, and Asp495; these read TLGP, DGTTT, and NAA.

This sequence belongs to the chaperonin (HSP60) family. In terms of assembly, forms a cylinder of 14 subunits composed of two heptameric rings stacked back-to-back. Interacts with the co-chaperonin GroES.

The protein resides in the cytoplasm. It catalyses the reaction ATP + H2O + a folded polypeptide = ADP + phosphate + an unfolded polypeptide.. In terms of biological role, together with its co-chaperonin GroES, plays an essential role in assisting protein folding. The GroEL-GroES system forms a nano-cage that allows encapsulation of the non-native substrate proteins and provides a physical environment optimized to promote and accelerate protein folding. The sequence is that of Chaperonin GroEL from Pseudomonas syringae pv. tomato (strain ATCC BAA-871 / DC3000).